A 572-amino-acid chain; its full sequence is Flagellin B (572 aa).

The protein belongs to the bacterial flagellin family. As to quaternary structure, heteromer of flaA and flaB.

Its subcellular location is the secreted. It is found in the bacterial flagellum. In terms of biological role, flagellin is the subunit protein which polymerizes to form the filaments of bacterial flagella. This is Flagellin B (flaB) from Campylobacter jejuni subsp. jejuni serotype O:2 (strain ATCC 700819 / NCTC 11168).